The following is a 180-amino-acid chain: MTNLRKELEKCKHPNSRKTKALGKKARRQNNKHKVRLGHAIKSNITGEKLSWFLGQIDEGRTEPLRPQELEDLIELYFTRFDEELEQINLKQSIGKHRANQHAARKDVITMTLEKERNEFRTGGLELMNLCDPLKLKMLRDWDGSALSVQHLKLDLVSYNMLQRLKEQSKKKETSEQMET.

The segment covering 1 to 12 has biased composition (basic and acidic residues); that stretch reads MTNLRKELEKCK. Residues 1–32 form a disordered region; the sequence is MTNLRKELEKCKHPNSRKTKALGKKARRQNNK. Basic residues predominate over residues 13 to 32; sequence HPNSRKTKALGKKARRQNNK.

This sequence belongs to the TMA16 family.

This chain is Translation machinery-associated protein 16 homolog, found in Drosophila melanogaster (Fruit fly).